The primary structure comprises 418 residues: Gamma-glutamyl phosphate reductase (418 aa).

Belongs to the gamma-glutamyl phosphate reductase family.

The protein resides in the cytoplasm. It catalyses the reaction L-glutamate 5-semialdehyde + phosphate + NADP(+) = L-glutamyl 5-phosphate + NADPH + H(+). It participates in amino-acid biosynthesis; L-proline biosynthesis; L-glutamate 5-semialdehyde from L-glutamate: step 2/2. Functionally, catalyzes the NADPH-dependent reduction of L-glutamate 5-phosphate into L-glutamate 5-semialdehyde and phosphate. The product spontaneously undergoes cyclization to form 1-pyrroline-5-carboxylate. The sequence is that of Gamma-glutamyl phosphate reductase from Desulfotalea psychrophila (strain LSv54 / DSM 12343).